The sequence spans 365 residues: Protein mab-21-like (365 aa).

The protein belongs to the mab-21 family.

The protein is Protein mab-21-like of Aedes aegypti (Yellowfever mosquito).